A 136-amino-acid polypeptide reads, in one-letter code: Ribosome-binding factor A (136 aa).

Positions 1–22 are disordered; that stretch reads MNTAGPAGKLAGHAASGPTQRQ.

This sequence belongs to the RbfA family. As to quaternary structure, monomer. Binds 30S ribosomal subunits, but not 50S ribosomal subunits or 70S ribosomes.

The protein resides in the cytoplasm. In terms of biological role, one of several proteins that assist in the late maturation steps of the functional core of the 30S ribosomal subunit. Associates with free 30S ribosomal subunits (but not with 30S subunits that are part of 70S ribosomes or polysomes). Required for efficient processing of 16S rRNA. May interact with the 5'-terminal helix region of 16S rRNA. This Gluconacetobacter diazotrophicus (strain ATCC 49037 / DSM 5601 / CCUG 37298 / CIP 103539 / LMG 7603 / PAl5) protein is Ribosome-binding factor A.